The chain runs to 205 residues: Large ribosomal subunit protein bL25 (205 aa).

The segment at phenylalanine 178–glutamate 205 is disordered. Over residues glutamate 182 to glutamate 197 the composition is skewed to acidic residues.

Belongs to the bacterial ribosomal protein bL25 family. CTC subfamily. In terms of assembly, part of the 50S ribosomal subunit; part of the 5S rRNA/L5/L18/L25 subcomplex. Contacts the 5S rRNA. Binds to the 5S rRNA independently of L5 and L18.

Functionally, this is one of the proteins that binds to the 5S RNA in the ribosome where it forms part of the central protuberance. In Cutibacterium acnes (strain DSM 16379 / KPA171202) (Propionibacterium acnes), this protein is Large ribosomal subunit protein bL25.